The primary structure comprises 389 residues: Monomeric sarcosine oxidase (389 aa).

FAD is bound at residue 8–38 (DVIVVGAGSMGMAAGYYLSKQGVKTLLVDSF). C318 is modified (S-8alpha-FAD cysteine).

The protein belongs to the MSOX/MTOX family. MSOX subfamily. In terms of assembly, monomer. It depends on FAD as a cofactor.

The protein resides in the cytoplasm. The catalysed reaction is sarcosine + O2 + H2O = formaldehyde + glycine + H2O2. Functionally, catalyzes the oxidative demethylation of sarcosine. This is Monomeric sarcosine oxidase (soxA) from Arthrobacter sp. (strain TE1826).